A 1316-amino-acid chain; its full sequence is DNA-directed RNA polymerase subunit beta' (1316 aa).

Positions 60, 62, 75, and 78 each coordinate Zn(2+). Residues D535, D537, and D539 each coordinate Mg(2+). Residues C891, C968, C975, and C978 each coordinate Zn(2+).

The protein belongs to the RNA polymerase beta' chain family. The RNAP catalytic core consists of 2 alpha, 1 beta, 1 beta' and 1 omega subunit. When a sigma factor is associated with the core the holoenzyme is formed, which can initiate transcription. The cofactor is Mg(2+). It depends on Zn(2+) as a cofactor.

The catalysed reaction is RNA(n) + a ribonucleoside 5'-triphosphate = RNA(n+1) + diphosphate. DNA-dependent RNA polymerase catalyzes the transcription of DNA into RNA using the four ribonucleoside triphosphates as substrates. The sequence is that of DNA-directed RNA polymerase subunit beta' from Mycobacterium marinum (strain ATCC BAA-535 / M).